Here is a 151-residue protein sequence, read N- to C-terminus: Nascent polypeptide-associated complex subunit beta (151 aa).

2 disordered regions span residues 1 to 38 (MDPS…AADD) and 123 to 151 (KVSE…DEQD). Basic residues predominate over residues 20–29 (TPRRKVKKPS). An NAC-A/B domain is found at 35–100 (AADDKKVQGA…AEEKTLSEIL (66 aa)).

Belongs to the NAC-beta family. Part of the nascent polypeptide-associated complex (NAC), consisting of ucp15 and btf3. NAC associates with ribosomes via btf3.

Its subcellular location is the cytoplasm. The protein resides in the nucleus. Its function is as follows. Component of the nascent polypeptide-associated complex (NAC), a dynamic component of the ribosomal exit tunnel, protecting the emerging polypeptides from interaction with other cytoplasmic proteins to ensure appropriate nascent protein targeting. The NAC complex also promotes mitochondrial protein import by enhancing productive ribosome interactions with the outer mitochondrial membrane and blocks the inappropriate interaction of ribosomes translating non-secretory nascent polypeptides with translocation sites in the membrane of the endoplasmic reticulum. EGD1 may act as a transcription factor that exert a negative effect on the expression of several genes that are transcribed by RNA polymerase II. The protein is Nascent polypeptide-associated complex subunit beta (btf3) of Schizosaccharomyces pombe (strain 972 / ATCC 24843) (Fission yeast).